Reading from the N-terminus, the 365-residue chain is MKLSDFDFDLPSELIAQYPSRERDNSDLLIAVTPPIKTKFYNIIDYLKEGDLLVFNNSKVIKAKLNLGENITINLNQKLSDDSWSAFAKPARKLHVNDEFYFDNHKVIITEKLAMGEIKVKFELNDISVFEFLNKYGEMPLPVYIRRSHSLCHPVATTTGSKTYLNNDWIPWSNHGMTNTQNDNDRYQTVYSQIEGSVAAPTAGLHFTKDILDKLKAEGIQATFLTLHVGAGTFLPVKTENIHEHKMHTEYCSITPDTAKIINKAKQEGKRIIAVGTTTLRTLESSCNNGIVKAGSFKTDIFITPGFKFQTADMLLTNFHFPKSTLFMLICAFAGFKEMHELYKYAIKEAMRFFSYGDATLLCRK.

Belongs to the QueA family. Monomer.

The protein localises to the cytoplasm. The enzyme catalyses 7-aminomethyl-7-carbaguanosine(34) in tRNA + S-adenosyl-L-methionine = epoxyqueuosine(34) in tRNA + adenine + L-methionine + 2 H(+). The protein operates within tRNA modification; tRNA-queuosine biosynthesis. Transfers and isomerizes the ribose moiety from AdoMet to the 7-aminomethyl group of 7-deazaguanine (preQ1-tRNA) to give epoxyqueuosine (oQ-tRNA). The protein is S-adenosylmethionine:tRNA ribosyltransferase-isomerase of Rickettsia africae (strain ESF-5).